The chain runs to 274 residues: Diaminopimelate epimerase (274 aa).

Asn11, Gln44, and Asn64 together coordinate substrate. Cys73 acts as the Proton donor in catalysis. Residues 74–75, Asn157, Asn190, and 208–209 each bind substrate; these read GN and ER. The active-site Proton acceptor is Cys217. 218–219 contacts substrate; the sequence is GS.

This sequence belongs to the diaminopimelate epimerase family. Homodimer.

It localises to the cytoplasm. It carries out the reaction (2S,6S)-2,6-diaminopimelate = meso-2,6-diaminopimelate. Its pathway is amino-acid biosynthesis; L-lysine biosynthesis via DAP pathway; DL-2,6-diaminopimelate from LL-2,6-diaminopimelate: step 1/1. Catalyzes the stereoinversion of LL-2,6-diaminopimelate (L,L-DAP) to meso-diaminopimelate (meso-DAP), a precursor of L-lysine and an essential component of the bacterial peptidoglycan. This chain is Diaminopimelate epimerase, found in Pectobacterium carotovorum subsp. carotovorum (strain PC1).